Here is a 394-residue protein sequence, read N- to C-terminus: Probable cytosolic iron-sulfur protein assembly protein 1 (394 aa).

WD repeat units lie at residues 10 to 49 (AHND…NFPL), 56 to 108 (AHKR…EQDS), 144 to 184 (GHEN…EEFE), 191 to 230 (DHQH…DDWS), 237 to 284 (GHGG…TEQI), 313 to 352 (IHKY…KWEI), and 359 to 394 (AHGV…IWEP).

Belongs to the WD repeat CIA1 family. Interacts with NAR1.

It is found in the cytoplasm. It localises to the nucleus. Essential component of the cytosolic iron-sulfur (Fe/S) protein assembly machinery. Required for the maturation of extramitochondrial Fe/S proteins. This Debaryomyces hansenii (strain ATCC 36239 / CBS 767 / BCRC 21394 / JCM 1990 / NBRC 0083 / IGC 2968) (Yeast) protein is Probable cytosolic iron-sulfur protein assembly protein 1.